The following is a 225-amino-acid chain: Uracil-DNA glycosylase (225 aa).

Aspartate 65 functions as the Proton acceptor in the catalytic mechanism.

Belongs to the uracil-DNA glycosylase (UDG) superfamily. UNG family.

The protein localises to the cytoplasm. The enzyme catalyses Hydrolyzes single-stranded DNA or mismatched double-stranded DNA and polynucleotides, releasing free uracil.. Excises uracil residues from the DNA which can arise as a result of misincorporation of dUMP residues by DNA polymerase or due to deamination of cytosine. This chain is Uracil-DNA glycosylase, found in Bacillus cytotoxicus (strain DSM 22905 / CIP 110041 / 391-98 / NVH 391-98).